Reading from the N-terminus, the 533-residue chain is Calcium-dependent protein kinase 12 (533 aa).

The segment at 1-77 (MGNCFTKTYE…RASGGGGEMG (77 aa)) is disordered. Gly2 carries N-myristoyl glycine lipidation. Over residues 26 to 38 (ERSKARGGDEPGT) the composition is skewed to basic and acidic residues. The span at 57-69 (GSSSAAGALSRRA) shows a compositional bias: low complexity. A Protein kinase domain is found at 91–349 (YQLDRKLGSG…ASQALEHRWL (259 aa)). ATP contacts are provided by residues 97-105 (LGSGQFGTT) and Lys120. The Proton acceptor role is filled by Asp215. Positions 354-384 (ASDRPIDSAVLSRMKQFKAMNKLKQLALKVI) are autoinhibitory domain. 4 consecutive EF-hand domains span residues 391 to 426 (EEIK…LGSR), 427 to 462 (ISEA…KHKL), 463 to 498 (EKEE…YGMG), and 499 to 533 (DEAN…GIQT). 20 residues coordinate Ca(2+): Asp404, Asp406, Ser408, Thr410, Glu415, Asp440, Asp442, Ser444, Ser446, Glu451, Asp476, Asp478, Ser480, Tyr482, Glu487, Asp511, Asp513, Asp515, Arg517, and Glu522.

It belongs to the protein kinase superfamily. Ser/Thr protein kinase family. CDPK subfamily. Expressed in roots, leaf blades and developing seeds. Expressed in vascular tissues of roots and leaf blades. Expressed in the phloem tissue of the large vascular bundle in leaf blades.

It localises to the membrane. The enzyme catalyses L-seryl-[protein] + ATP = O-phospho-L-seryl-[protein] + ADP + H(+). It carries out the reaction L-threonyl-[protein] + ATP = O-phospho-L-threonyl-[protein] + ADP + H(+). With respect to regulation, activated by calcium. Autophosphorylation may play an important role in the regulation of the kinase activity. Its function is as follows. May play a role in signal transduction pathways that involve calcium as a second messenger. Functions in signal transduction pathways that positively regulate responses to low-nitrogen. Functions in multiple signaling pathways, positively regulating salt tolerance and negatively modulating rice blast fungus resistance. May promote tolerance to salt stress by negatively regulating NADPH oxidase and positively regulating reactive oxygen species (ROS) scavengers. The polypeptide is Calcium-dependent protein kinase 12 (Oryza sativa subsp. japonica (Rice)).